The primary structure comprises 878 residues: Alanine--tRNA ligase (878 aa).

Zn(2+)-binding residues include His-566, His-570, Cys-668, and His-672.

This sequence belongs to the class-II aminoacyl-tRNA synthetase family. Zn(2+) is required as a cofactor.

It localises to the cytoplasm. The enzyme catalyses tRNA(Ala) + L-alanine + ATP = L-alanyl-tRNA(Ala) + AMP + diphosphate. Functionally, catalyzes the attachment of alanine to tRNA(Ala) in a two-step reaction: alanine is first activated by ATP to form Ala-AMP and then transferred to the acceptor end of tRNA(Ala). Also edits incorrectly charged Ser-tRNA(Ala) and Gly-tRNA(Ala) via its editing domain. This chain is Alanine--tRNA ligase, found in Bacillus velezensis (strain DSM 23117 / BGSC 10A6 / LMG 26770 / FZB42) (Bacillus amyloliquefaciens subsp. plantarum).